The following is a 39-amino-acid chain: Photosystem II reaction center protein Psb30 (39 aa).

A helical membrane pass occupies residues 12 to 32 (IFQLTFVGLIMVAGPVVIFLL).

This sequence belongs to the Psb30/Ycf12 family. As to quaternary structure, PSII is composed of 1 copy each of membrane proteins PsbA, PsbB, PsbC, PsbD, PsbE, PsbF, PsbH, PsbI, PsbJ, PsbK, PsbL, PsbM, PsbT, PsbX, PsbY, PsbZ, Psb30/Ycf12, peripheral proteins PsbO, CyanoQ (PsbQ), PsbU, PsbV and a large number of cofactors. It forms dimeric complexes.

The protein resides in the cellular thylakoid membrane. Its function is as follows. A core subunit of photosystem II (PSII), probably helps stabilize the reaction center. The protein is Photosystem II reaction center protein Psb30 of Rippkaea orientalis (strain PCC 8801 / RF-1) (Cyanothece sp. (strain PCC 8801)).